The primary structure comprises 153 residues: Coiled-coil domain-containing protein 182 (153 aa).

Residues 46-109 (ADLEILQQKV…RLREEEDRGI (64 aa)) are a coiled coil.

This is Coiled-coil domain-containing protein 182 (CCDC182) from Homo sapiens (Human).